The primary structure comprises 285 residues: Tropomyosin alpha-3 chain (285 aa).

A coiled-coil region spans residues 1 to 285 (MMEAIKKKMQ…DHALNDMTSI (285 aa)). An N-acetylmethionine modification is found at M2. An N-acetylalanine modification is found at M2. T54 is subject to Phosphothreonine. S62 and S88 each carry phosphoserine. T109 carries the phosphothreonine modification. Residues S207 and S216 each carry the phosphoserine modification. At I228 the chain carries N6-acetyllysine. T253 is modified (phosphothreonine). The residue at position 262 (Y262) is a Phosphotyrosine. A Phosphoserine modification is found at S272. T283 carries the post-translational modification Phosphothreonine. S284 bears the Phosphoserine mark.

This sequence belongs to the tropomyosin family. In terms of assembly, homodimer. Heterodimer of an alpha (TPM1, TPM3 or TPM4) and a beta (TPM2) chain. Interacts with TMOD1. Interacts with TNNT1.

The protein localises to the cytoplasm. It localises to the cytoskeleton. Binds to actin filaments in muscle and non-muscle cells. Plays a central role, in association with the troponin complex, in the calcium dependent regulation of vertebrate striated muscle contraction. Smooth muscle contraction is regulated by interaction with caldesmon. In non-muscle cells is implicated in stabilizing cytoskeleton actin filaments. This is Tropomyosin alpha-3 chain (Tpm3) from Mus musculus (Mouse).